The chain runs to 177 residues: Adenylate kinase (177 aa).

Residue 13 to 18 (GCGKGT) participates in ATP binding. An NMP region spans residues 33-62 (SSGDIIREEMKKSSKEATVIREMVNSGRLA). AMP is bound by residues Ser34, Arg39, 60-62 (RLA), 85-88 (GYPR), and Gln92. Residues 119–127 (GRNEGRDDD) are LID. Arg120 is a binding site for ATP. AMP-binding residues include Arg124 and Arg135.

This sequence belongs to the adenylate kinase family. As to quaternary structure, monomer.

The protein localises to the cytoplasm. The catalysed reaction is AMP + ATP = 2 ADP. Functionally, catalyzes the reversible transfer of the terminal phosphate group between ATP and AMP. Plays an important role in cellular energy homeostasis and in adenine nucleotide metabolism. The polypeptide is Adenylate kinase (Encephalitozoon cuniculi (strain GB-M1) (Microsporidian parasite)).